The following is a 299-amino-acid chain: Regucalcin (299 aa).

Residue Glu18 participates in a divalent metal cation binding. Residues Arg101, Asn103, and Glu121 each coordinate substrate. The a divalent metal cation site is built by Asn154 and Asp204. Asp204 acts as the Proton donor/acceptor in catalysis.

Belongs to the SMP-30/CGR1 family. It depends on Zn(2+) as a cofactor. Mn(2+) is required as a cofactor. Ca(2+) serves as cofactor. The cofactor is Mg(2+). In terms of tissue distribution, expressed in the liver, and in the pronephros from the late tadpole stage.

It is found in the cytoplasm. It carries out the reaction D-glucono-1,5-lactone + H2O = D-gluconate + H(+). Its pathway is cofactor biosynthesis; L-ascorbate biosynthesis via UDP-alpha-D-glucuronate pathway; L-ascorbate from UDP-alpha-D-glucuronate: step 3/4. Gluconolactonase with low activity towards other sugar lactones, including gulonolactone and galactonolactone. Catalyzes a key step in ascorbic acid (vitamin C) biosynthesis. Can also hydrolyze diisopropyl phosphorofluoridate and phenylacetate (in vitro). Calcium-binding protein. Modulates Ca(2+) signaling, and Ca(2+)-dependent cellular processes and enzyme activities. This chain is Regucalcin, found in Xenopus laevis (African clawed frog).